Consider the following 948-residue polypeptide: Non-lysosomal glucosylceramidase (948 aa).

Over 1 to 736 (MAEPLAVETK…VMDGPSAYCS (736 aa)) the chain is Extracellular. The segment covering 177–195 (STRDKTSDPDGDPDGERTK) has biased composition (basic and acidic residues). The tract at residues 177–197 (STRDKTSDPDGDPDGERTKCQ) is disordered. The N-linked (GlcNAc...) asparagine glycan is linked to Asn200. Phosphoserine is present on Ser214. 3 N-linked (GlcNAc...) asparagine glycosylation sites follow: Asn288, Asn555, and Asn629. Phosphoserine occurs at positions 667 and 669. Residue Asn673 is glycosylated (N-linked (GlcNAc...) asparagine). The helical transmembrane segment at 737–753 (GLWLAALQAMSAMATIL) threads the bilayer. Residues 754–948 (DQPNDCLRYQ…ALERRRAQRD (195 aa)) lie on the Cytoplasmic side of the membrane.

This sequence belongs to the non-lysosomal glucosylceramidase family.

It is found in the cell membrane. It catalyses the reaction a beta-D-glucosyl-(1&lt;-&gt;1')-N-acylsphing-4-enine + H2O = an N-acylsphing-4-enine + D-glucose. In terms of biological role, non-lysosomal glucosylceramidase that catalyzes the conversion of glucosylceramide to free glucose and ceramide. In Drosophila melanogaster (Fruit fly), this protein is Non-lysosomal glucosylceramidase.